We begin with the raw amino-acid sequence, 212 residues long: Thymidine kinase (212 aa).

Residues 16-23 (GPMFSGKS) and 99-102 (DEAQ) contribute to the ATP site. The Proton acceptor role is filled by Glu100.

Belongs to the thymidine kinase family. Homotetramer.

It is found in the cytoplasm. The catalysed reaction is thymidine + ATP = dTMP + ADP + H(+). The protein is Thymidine kinase of Deinococcus radiodurans (strain ATCC 13939 / DSM 20539 / JCM 16871 / CCUG 27074 / LMG 4051 / NBRC 15346 / NCIMB 9279 / VKM B-1422 / R1).